Consider the following 248-residue polypeptide: Ubiquinone biosynthesis O-methyltransferase (248 aa).

Arg41, Gly72, Asp93, and Met136 together coordinate S-adenosyl-L-methionine.

It belongs to the methyltransferase superfamily. UbiG/COQ3 family.

It carries out the reaction a 3-demethylubiquinol + S-adenosyl-L-methionine = a ubiquinol + S-adenosyl-L-homocysteine + H(+). The catalysed reaction is a 3-(all-trans-polyprenyl)benzene-1,2-diol + S-adenosyl-L-methionine = a 2-methoxy-6-(all-trans-polyprenyl)phenol + S-adenosyl-L-homocysteine + H(+). The protein operates within cofactor biosynthesis; ubiquinone biosynthesis. In terms of biological role, O-methyltransferase that catalyzes the 2 O-methylation steps in the ubiquinone biosynthetic pathway. This Rhizobium etli (strain CIAT 652) protein is Ubiquinone biosynthesis O-methyltransferase.